Here is a 537-residue protein sequence, read N- to C-terminus: Extracellular exo-inulinase (537 aa).

The first 19 residues, 1-19, serve as a signal peptide directing secretion; the sequence is MAPLSKALSVFMLMGITYA. Beta-D-fructose is bound by residues Asn40 and Asp41. The active-site Nucleophile is Asp41. A glycan (N-linked (GlcNAc...) asparagine) is linked at Asn49. The beta-D-fructose site is built by Gln57 and Trp65. The N-linked (GlcNAc...) asparagine glycan is linked to Asn67. Position 103 (Ser103) interacts with beta-D-fructose. Asn111 and Asn112 each carry an N-linked (GlcNAc...) asparagine glycan. Arg188, Asp189, and Glu241 together coordinate beta-D-fructose. Glu241 (proton donor/acceptor) is an active-site residue. N-linked (GlcNAc...) asparagine glycans are attached at residues Asn254 and Asn300. Residue Trp335 coordinates beta-D-fructose. N-linked (GlcNAc...) asparagine glycosylation is found at Asn398 and Asn430.

Belongs to the glycosyl hydrolase 32 family.

Its subcellular location is the secreted. The enzyme catalyses Hydrolysis of terminal, non-reducing (2-&gt;1)- and (2-&gt;6)-linked beta-D-fructofuranose residues in fructans.. Its function is as follows. Exo-inulinase involved in utilization of the plant storage polymer inulin, consisting of fructooligosaccharides with a degree of polymerization (DP) value from 2 to 60. Splits off terminal fructose units successively from the non-reducing end of the inulin molecule, and also hydrolyzes levan, stachyose and raffinose. Hydrolyzes both beta-2,1- as well as beta-2,6-fructosyl linkages in fructooligosaccharides. This Aspergillus awamori (Black koji mold) protein is Extracellular exo-inulinase.